Reading from the N-terminus, the 325-residue chain is Beta-ketoacyl-[acyl-carrier-protein] synthase III (325 aa).

Residues Cys113 and His250 contribute to the active site. The ACP-binding stretch occupies residues 251–255; the sequence is QANIR. Asn280 is an active-site residue.

Belongs to the thiolase-like superfamily. FabH family. Homodimer.

It localises to the cytoplasm. It catalyses the reaction malonyl-[ACP] + acetyl-CoA + H(+) = 3-oxobutanoyl-[ACP] + CO2 + CoA. Its pathway is lipid metabolism; fatty acid biosynthesis. Catalyzes the condensation reaction of fatty acid synthesis by the addition to an acyl acceptor of two carbons from malonyl-ACP. Catalyzes the first condensation reaction which initiates fatty acid synthesis and may therefore play a role in governing the total rate of fatty acid production. Possesses both acetoacetyl-ACP synthase and acetyl transacylase activities. Its substrate specificity determines the biosynthesis of branched-chain and/or straight-chain of fatty acids. This Streptococcus suis (strain 98HAH33) protein is Beta-ketoacyl-[acyl-carrier-protein] synthase III.